The chain runs to 288 residues: Large ribosomal subunit protein uL2 (288 aa).

Residues 29-43 (PEKSLTRGFKRDKGR) show a composition bias toward basic and acidic residues. Disordered regions lie at residues 29 to 59 (PEKSLTRGFKRDKGRNNRGVITSRRRGGGHK) and 210 to 288 (GRNR…GRQS). Composition is skewed to basic residues over residues 210-221 (GRNRWKGRRPKV) and 272-288 (VRRRKKSSKRGRGGRQS).

The protein belongs to the universal ribosomal protein uL2 family. As to quaternary structure, part of the 50S ribosomal subunit. Forms a bridge to the 30S subunit in the 70S ribosome.

One of the primary rRNA binding proteins. Required for association of the 30S and 50S subunits to form the 70S ribosome, for tRNA binding and peptide bond formation. It has been suggested to have peptidyltransferase activity; this is somewhat controversial. Makes several contacts with the 16S rRNA in the 70S ribosome. The polypeptide is Large ribosomal subunit protein uL2 (Thermosynechococcus vestitus (strain NIES-2133 / IAM M-273 / BP-1)).